The primary structure comprises 366 residues: Ferredoxin--NADP reductase (366 aa).

Positions 51, 59, 64, 104, 139, 308, and 349 each coordinate FAD.

The protein belongs to the ferredoxin--NADP reductase type 2 family. In terms of assembly, homodimer. Requires FAD as cofactor.

It carries out the reaction 2 reduced [2Fe-2S]-[ferredoxin] + NADP(+) + H(+) = 2 oxidized [2Fe-2S]-[ferredoxin] + NADPH. The polypeptide is Ferredoxin--NADP reductase (Polaromonas naphthalenivorans (strain CJ2)).